The chain runs to 100 residues: Urease subunit gamma (100 aa).

It belongs to the urease gamma subunit family. Heterotrimer of UreA (gamma), UreB (beta) and UreC (alpha) subunits. Three heterotrimers associate to form the active enzyme.

It is found in the cytoplasm. The enzyme catalyses urea + 2 H2O + H(+) = hydrogencarbonate + 2 NH4(+). It functions in the pathway nitrogen metabolism; urea degradation; CO(2) and NH(3) from urea (urease route): step 1/1. The sequence is that of Urease subunit gamma from Corynebacterium efficiens (strain DSM 44549 / YS-314 / AJ 12310 / JCM 11189 / NBRC 100395).